Consider the following 193-residue polypeptide: Guanylate kinase (193 aa).

A Guanylate kinase-like domain is found at 12–191; the sequence is DLLTIVAGPT…AANELWLAMN (180 aa). An ATP-binding site is contributed by 19–26; the sequence is GPTAVGKG.

This sequence belongs to the guanylate kinase family.

It localises to the cytoplasm. The catalysed reaction is GMP + ATP = GDP + ADP. Its function is as follows. Essential for recycling GMP and indirectly, cGMP. The polypeptide is Guanylate kinase (Tropheryma whipplei (strain TW08/27) (Whipple's bacillus)).